Here is a 101-residue protein sequence, read N- to C-terminus: Urease subunit beta (101 aa).

This sequence belongs to the urease beta subunit family. In terms of assembly, heterotrimer of UreA (gamma), UreB (beta) and UreC (alpha) subunits. Three heterotrimers associate to form the active enzyme.

It localises to the cytoplasm. It carries out the reaction urea + 2 H2O + H(+) = hydrogencarbonate + 2 NH4(+). It functions in the pathway nitrogen metabolism; urea degradation; CO(2) and NH(3) from urea (urease route): step 1/1. The polypeptide is Urease subunit beta (Burkholderia mallei (strain NCTC 10247)).